The sequence spans 314 residues: MFQPAGHGQDWAMEGPRDGLKKERLVDDRHDSGLDSMKDEEYEQMVKELREIRLQPQEAPLAAEPWKQQLTEDGDSFLHLAIIHEEKPLTMEVIGQVKGDLAFLNFQNNLQQTPLHLAVITNQPGIAEALLKAGCDPELRDFRGNTPLHLACEQGCLASVAVLTQTCTPQHLHSVLQATNYNGHTCLHLASIHGYLAIVEHLVTLGADVNAQEPCNGRTALHLAVDLQNPDLVSLLLKCGADVNRVTYQGYSPYQLTWGRPSTRIQQQLGQLTLENLQMLPESEDEESYDTESEFTEDELPYDDCVFGGQRLTL.

Positions 1-40 (MFQPAGHGQDWAMEGPRDGLKKERLVDDRHDSGLDSMKDE) are disordered. Basic and acidic residues predominate over residues 15 to 40 (GPRDGLKKERLVDDRHDSGLDSMKDE). Residue Lys-21 forms a Glycyl lysine isopeptide (Lys-Gly) (interchain with G-Cter in SUMO); alternate linkage. Residue Lys-21 forms a Glycyl lysine isopeptide (Lys-Gly) (interchain with G-Cter in ubiquitin); alternate linkage. Lys-22 is covalently cross-linked (Glycyl lysine isopeptide (Lys-Gly) (interchain with G-Cter in ubiquitin)). Positions 30–36 (HDSGLDS) match the Destruction motif motif. Ser-32 carries the phosphoserine; by IKKB modification. Phosphoserine; by IKKA, IKKB, IKKE and TBK1 is present on Ser-36. At Tyr-42 the chain carries Phosphotyrosine. A Nuclear export signal motif is present at residues 45–54 (MVKELREIRL). ANK repeat units lie at residues 73 to 103 (DGDS…DLAF), 110 to 139 (LQQT…DPEL), 143 to 172 (RGNT…PQHL), 182 to 211 (NGHT…DVNA), and 216 to 245 (NGRT…DVNR). A Nuclear import signal motif is present at residues 110 to 120 (LQQTPLHLAVI). 2 positions are modified to (3S)-3-hydroxyasparagine; by HIF1AN: Asn-210 and Asn-244. Residues Ser-283 and Ser-288 each carry the phosphoserine; by CK2 modification. A Phosphothreonine; by CK2 modification is found at Thr-291. The residue at position 293 (Ser-293) is a Phosphoserine; by CK2. Thr-296 is subject to Phosphothreonine.

It belongs to the NF-kappa-B inhibitor family. Interacts with RELA; the interaction requires the nuclear import signal. Part of a 70-90 kDa complex at least consisting of CHUK, IKBKB, NFKBIA, RELA, ELP1 and MAP3K14. Interacts with NKIRAS1 and NKIRAS2. Interacts with RWDD3; the interaction enhances sumoylation. Interacts with PRMT2. Interacts with PRKACA in platelets; this interaction is disrupted by thrombin and collagen. Interacts with MEFV. Interacts with DDRGK1; positively regulates NFKBIA phosphorylation and degradation. Interacts with HNRNPA2B1; the interaction may be mediated by the RRM2 domain of HNRNPA2B1, and HNRNPA2B1 may interact simultaneously with FAM76B and either NFKBIA or NFKBIE to form a complex. Phosphorylated at Ser-32 and Ser-36 by IKKA/CHUK and IKKB/IKBKB; disables inhibition of NF-kappa-B DNA-binding activity. Phosphorylation at positions 32 and 36 is prerequisite to recognition by the SCF(FBXW11) and SCF(BTRC) complexes, leading to polyubiquitination and subsequent degradation. Post-translationally, polyubiquitinated at Lys-21 and/or Lys-22 following phosphorylation at Ser-32 and Ser-36. Monoubiquitinated at Lys-21 and/or Lys-22 by UBE2D3. Ubiquitin chain elongation is then performed by CDC34 in cooperation with the SCF(FBXW11) E3 ligase complex, building ubiquitin chains from the UBE2D3-primed NFKBIA-linked ubiquitin. The resulting polyubiquitination leads to protein degradation. Also ubiquitinated by the SCF(BTRC) complex following stimulus-dependent phosphorylation at Ser-32 and Ser-36. Deubiquitinated by USP38, leading to NF-kappa-B inhibition. In terms of processing, sumoylated; sumoylation requires the presence of the nuclear import signal. Sumoylation blocks ubiquitination and proteasome-mediated degradation of the protein thereby increasing the protein stability. Hydroxylated by HIF1AN. As to expression, highly expressed in lymph node, thymus followed by liver, brain, muscle, kidney, gastrointestinal and reproductive tract.

The protein localises to the cytoplasm. The protein resides in the nucleus. In terms of biological role, inhibits the activity of dimeric NF-kappa-B/REL complexes by trapping REL (RELA/p65 and NFKB1/p50) dimers in the cytoplasm by masking their nuclear localization signals. On cellular stimulation by immune and pro-inflammatory responses, becomes phosphorylated promoting ubiquitination and degradation, enabling the dimeric RELA to translocate to the nucleus and activate transcription. This is NF-kappa-B inhibitor alpha (Nfkbia) from Mus musculus (Mouse).